Consider the following 331-residue polypeptide: Pantothenate kinase (331 aa).

109–116 (GSVAVGKS) serves as a coordination point for ATP.

Belongs to the prokaryotic pantothenate kinase family.

The protein localises to the cytoplasm. The enzyme catalyses (R)-pantothenate + ATP = (R)-4'-phosphopantothenate + ADP + H(+). It participates in cofactor biosynthesis; coenzyme A biosynthesis; CoA from (R)-pantothenate: step 1/5. The chain is Pantothenate kinase from Rhizobium johnstonii (strain DSM 114642 / LMG 32736 / 3841) (Rhizobium leguminosarum bv. viciae).